Reading from the N-terminus, the 379-residue chain is Homoserine O-succinyltransferase (379 aa).

Positions 48 to 357 (NAVLICHALS…SAHGHDAFLM (310 aa)) constitute an AB hydrolase-1 domain. Serine 154 (nucleophile) is an active-site residue. Arginine 224 contributes to the substrate binding site. Active-site residues include aspartate 319 and histidine 352. Aspartate 353 is a substrate binding site.

It belongs to the AB hydrolase superfamily. MetX family. In terms of assembly, homodimer.

Its subcellular location is the cytoplasm. It catalyses the reaction L-homoserine + succinyl-CoA = O-succinyl-L-homoserine + CoA. The protein operates within amino-acid biosynthesis; L-methionine biosynthesis via de novo pathway; O-succinyl-L-homoserine from L-homoserine: step 1/1. In terms of biological role, transfers a succinyl group from succinyl-CoA to L-homoserine, forming succinyl-L-homoserine. This Neisseria gonorrhoeae (strain ATCC 700825 / FA 1090) protein is Homoserine O-succinyltransferase.